Consider the following 405-residue polypeptide: Type II secretion system protein F (405 aa).

The Cytoplasmic segment spans residues Met-1 to Asn-169. Positions 98, 151, and 155 each coordinate Ca(2+). The chain crosses the membrane as a helical span at residues Ala-170 to Gly-190. Over Tyr-191 to Gly-218 the chain is Periplasmic. Residues Leu-219–Leu-239 form a helical membrane-spanning segment. Topologically, residues Asp-240–Ala-370 are cytoplasmic. Residues Leu-371 to Ile-391 traverse the membrane as a helical segment. At Ser-392 to Gly-405 the chain is on the periplasmic side.

The protein belongs to the GSP F family. In terms of assembly, type II secretion system is composed of four main components: the outer membrane complex, the inner membrane complex, the cytoplasmic secretion ATPase and the periplasm-spanning pseudopilus. Homodimer. Interacts with XpsE and XpsL components.

Its subcellular location is the cell inner membrane. Its function is as follows. Component of the type II secretion system inner membrane complex required for the energy-dependent secretion of extracellular factors such as proteases and toxins from the periplasm. The chain is Type II secretion system protein F (xpsF) from Xanthomonas campestris pv. campestris (strain ATCC 33913 / DSM 3586 / NCPPB 528 / LMG 568 / P 25).